Consider the following 336-residue polypeptide: Ornithine carbamoyltransferase, catabolic (336 aa).

Residues 57–60 (STRT), Gln-84, Arg-108, and 135–138 (HPTQ) each bind carbamoyl phosphate. L-ornithine contacts are provided by residues Asn-168, Asp-232, and 236-237 (SM). Carbamoyl phosphate contacts are provided by residues 274–275 (CL) and Arg-321.

It belongs to the aspartate/ornithine carbamoyltransferase superfamily. OTCase family.

Its subcellular location is the cytoplasm. It carries out the reaction carbamoyl phosphate + L-ornithine = L-citrulline + phosphate + H(+). It participates in amino-acid degradation; L-arginine degradation via ADI pathway; carbamoyl phosphate from L-arginine: step 2/2. In terms of biological role, reversibly catalyzes the transfer of the carbamoyl group from carbamoyl phosphate (CP) to the N(epsilon) atom of ornithine (ORN) to produce L-citrulline. This is Ornithine carbamoyltransferase, catabolic (arcB) from Ectopseudomonas mendocina (Pseudomonas mendocina).